We begin with the raw amino-acid sequence, 156 residues long: Acyl carrier protein, mitochondrial (156 aa).

The N-terminal 68 residues, 1–68, are a transit peptide targeting the mitochondrion; the sequence is MASRVLSAYV…GRVTQLCRQY (68 aa). One can recognise a Carrier domain in the interval 77–152; the sequence is EGIQDRVLYV…EIVDYIADKK (76 aa). Lys-88 carries the N6-acetyllysine modification. An O-(pantetheine 4'-phosphoryl)serine modification is found at Ser-112.

The protein belongs to the acyl carrier protein (ACP) family. As to quaternary structure, mammalian complex I is composed of 45 different subunits. Interacts with ETFRF1. Identified in a complex composed of MALSU1, MIEF1 upstream open reading frame protein and NDUFAB1; within the trimeric complex, MIEF1 upstream open reading frame protein functions as a bridging scaffold that interacts with MALSU1 on one side, and with NDUFAB1 on the other side. The complex interacts with the mitochondrial large ribosomal subunit. Interacts with alpha-1-microglobulin chain; this interaction is required for the maintenance of mitochondrial redox homeostasis. Component of the mitochondrial core iron-sulfur cluster (ISC) complex composed of NFS1, LYRM4, NDUFAB1, ISCU, FXN, and FDX2; this complex is a heterohexamer containing two copies of each monomer. Component of the cyteine desulfurase complex composed of NFS1, LYRM4 and NDUFAB1; this complex contributes to the stability and cysteine desulfurase activity of NFS1. Post-translationally, phosphopantetheinylation at Ser-112 is essential for interactions with LYR motif-containing proteins.

Its subcellular location is the mitochondrion. Carrier of the growing fatty acid chain in fatty acid biosynthesis. Accessory and non-catalytic subunit of the mitochondrial membrane respiratory chain NADH dehydrogenase (Complex I), which functions in the transfer of electrons from NADH to the respiratory chain. Accessory protein, of the core iron-sulfur cluster (ISC) assembly complex, that regulates, in association with LYRM4, the stability and the cysteine desulfurase activity of NFS1 and participates in the [2Fe-2S] clusters assembly on the scaffolding protein ISCU. The core iron-sulfur cluster (ISC) assembly complex is involved in the de novo synthesis of a [2Fe-2S] cluster, the first step of the mitochondrial iron-sulfur protein biogenesis. This process is initiated by the cysteine desulfurase complex (NFS1:LYRM4:NDUFAB1) that produces persulfide which is delivered on the scaffold protein ISCU in a FXN-dependent manner. Then this complex is stabilized by FDX2 which provides reducing equivalents to accomplish the [2Fe-2S] cluster assembly. Finally, the [2Fe-2S] cluster is transferred from ISCU to chaperone proteins, including HSCB, HSPA9 and GLRX5. The sequence is that of Acyl carrier protein, mitochondrial from Pongo pygmaeus (Bornean orangutan).